The sequence spans 251 residues: Imidazole glycerol phosphate synthase subunit HisF (251 aa).

Active-site residues include Asp-11 and Asp-130.

The protein belongs to the HisA/HisF family. As to quaternary structure, heterodimer of HisH and HisF.

It localises to the cytoplasm. The catalysed reaction is 5-[(5-phospho-1-deoxy-D-ribulos-1-ylimino)methylamino]-1-(5-phospho-beta-D-ribosyl)imidazole-4-carboxamide + L-glutamine = D-erythro-1-(imidazol-4-yl)glycerol 3-phosphate + 5-amino-1-(5-phospho-beta-D-ribosyl)imidazole-4-carboxamide + L-glutamate + H(+). Its pathway is amino-acid biosynthesis; L-histidine biosynthesis; L-histidine from 5-phospho-alpha-D-ribose 1-diphosphate: step 5/9. Functionally, IGPS catalyzes the conversion of PRFAR and glutamine to IGP, AICAR and glutamate. The HisF subunit catalyzes the cyclization activity that produces IGP and AICAR from PRFAR using the ammonia provided by the HisH subunit. The protein is Imidazole glycerol phosphate synthase subunit HisF of Flavobacterium psychrophilum (strain ATCC 49511 / DSM 21280 / CIP 103535 / JIP02/86).